Consider the following 485-residue polypeptide: Sulfate adenylyltransferase subunit 1 (485 aa).

One can recognise a tr-type G domain in the interval K30–R243. The tract at residues G39 to S46 is G1. Residue G39–S46 participates in GTP binding. Residues G97 to D101 are G2. The G3 stretch occupies residues D118–G121. Residues D118–H122 and N173–D176 each bind GTP. Positions N173–D176 are G4. The interval S210 to L212 is G5.

This sequence belongs to the TRAFAC class translation factor GTPase superfamily. Classic translation factor GTPase family. CysN/NodQ subfamily. Heterodimer composed of CysD, the smaller subunit, and CysN.

The catalysed reaction is sulfate + ATP + H(+) = adenosine 5'-phosphosulfate + diphosphate. Its pathway is sulfur metabolism; hydrogen sulfide biosynthesis; sulfite from sulfate: step 1/3. Its function is as follows. With CysD forms the ATP sulfurylase (ATPS) that catalyzes the adenylation of sulfate producing adenosine 5'-phosphosulfate (APS) and diphosphate, the first enzymatic step in sulfur assimilation pathway. APS synthesis involves the formation of a high-energy phosphoric-sulfuric acid anhydride bond driven by GTP hydrolysis by CysN coupled to ATP hydrolysis by CysD. This is Sulfate adenylyltransferase subunit 1 from Shewanella oneidensis (strain ATCC 700550 / JCM 31522 / CIP 106686 / LMG 19005 / NCIMB 14063 / MR-1).